The following is a 528-amino-acid chain: Berberine bridge enzyme-like 17 (528 aa).

Positions 1 to 19 (MKEVVYVLLLVLLVSVSDA) are cleaved as a signal peptide. N-linked (GlcNAc...) asparagine glycosylation is found at asparagine 20, asparagine 35, asparagine 52, and asparagine 72. An intrachain disulfide couples cysteine 32 to cysteine 94. One can recognise an FAD-binding PCMH-type domain in the interval 69–246 (LNPNDTKLIA…LSWKINLVDV (178 aa)). The segment at residues 109–171 (HDYEGLSFTS…KTLAFAGGVC (63 aa)) is a cross-link (6-(S-cysteinyl)-8alpha-(pros-histidyl)-FAD (His-Cys)). N-linked (GlcNAc...) asparagine glycans are attached at residues asparagine 256, asparagine 340, and asparagine 439.

It belongs to the oxygen-dependent FAD-linked oxidoreductase family. FAD is required as a cofactor. In terms of processing, the FAD cofactor is bound via a bicovalent 6-S-cysteinyl, 8alpha-N1-histidyl FAD linkage.

The protein resides in the secreted. It is found in the cell wall. This chain is Berberine bridge enzyme-like 17, found in Arabidopsis thaliana (Mouse-ear cress).